The primary structure comprises 95 residues: Small ribosomal subunit protein uS19 (95 aa).

Belongs to the universal ribosomal protein uS19 family.

Its function is as follows. Protein S19 forms a complex with S13 that binds strongly to the 16S ribosomal RNA. In Coxiella burnetii (strain CbuK_Q154) (Coxiella burnetii (strain Q154)), this protein is Small ribosomal subunit protein uS19.